The primary structure comprises 276 residues: uncharacterized protein (276 aa).

The AB hydrolase-1 domain maps to P20–S137. Residues G57–Y76 form a disordered region.

Belongs to the AB hydrolase superfamily.

This is an uncharacterized protein from Staphylococcus aureus (strain MW2).